A 359-amino-acid polypeptide reads, in one-letter code: Nicotinate-nucleotide--dimethylbenzimidazole phosphoribosyltransferase (359 aa).

E318 serves as the catalytic Proton acceptor.

It belongs to the CobT family. In terms of assembly, homodimer.

The enzyme catalyses 5,6-dimethylbenzimidazole + nicotinate beta-D-ribonucleotide = alpha-ribazole 5'-phosphate + nicotinate + H(+). Its pathway is nucleoside biosynthesis; alpha-ribazole biosynthesis; alpha-ribazole from 5,6-dimethylbenzimidazole: step 1/2. In terms of biological role, catalyzes the synthesis of alpha-ribazole-5'-phosphate from nicotinate mononucleotide (NAMN) and 5,6-dimethylbenzimidazole (DMB). In Shigella sonnei (strain Ss046), this protein is Nicotinate-nucleotide--dimethylbenzimidazole phosphoribosyltransferase.